Here is a 179-residue protein sequence, read N- to C-terminus: Nicotinamide-nucleotide adenylyltransferase (179 aa).

The protein belongs to the archaeal NMN adenylyltransferase family.

Its subcellular location is the cytoplasm. The catalysed reaction is beta-nicotinamide D-ribonucleotide + ATP + H(+) = diphosphate + NAD(+). It functions in the pathway cofactor biosynthesis; NAD(+) biosynthesis; NAD(+) from nicotinamide D-ribonucleotide: step 1/1. The polypeptide is Nicotinamide-nucleotide adenylyltransferase (Thermoplasma acidophilum (strain ATCC 25905 / DSM 1728 / JCM 9062 / NBRC 15155 / AMRC-C165)).